A 359-amino-acid chain; its full sequence is 4-hydroxyproline 2-epimerase (359 aa).

The Proton acceptor role is filled by Cys-126. Substrate is bound by residues Gly-127–His-128, His-248, and Asp-274. Cys-278 functions as the Proton donor in the catalytic mechanism. Substrate is bound at residue Gly-279 to Thr-280.

It belongs to the proline racemase family.

It catalyses the reaction trans-4-hydroxy-L-proline = cis-4-hydroxy-D-proline. Its function is as follows. Catalyzes the epimerization of trans-4-hydroxy-L-proline (t4LHyp) to cis-4-hydroxy-D-proline (c4DHyp). Is likely involved in a degradation pathway that converts t4LHyp to alpha-ketoglutarate. Displays no proline racemase activity. This is 4-hydroxyproline 2-epimerase from Planctopirus limnophila (strain ATCC 43296 / DSM 3776 / IFAM 1008 / Mu 290) (Planctomyces limnophilus).